Consider the following 235-residue polypeptide: Demethylmenaquinone methyltransferase (235 aa).

Residues Thr-58, Asp-79, and 106–107 (NA) contribute to the S-adenosyl-L-methionine site.

It belongs to the class I-like SAM-binding methyltransferase superfamily. MenG/UbiE family.

It catalyses the reaction a 2-demethylmenaquinol + S-adenosyl-L-methionine = a menaquinol + S-adenosyl-L-homocysteine + H(+). The protein operates within quinol/quinone metabolism; menaquinone biosynthesis; menaquinol from 1,4-dihydroxy-2-naphthoate: step 2/2. Methyltransferase required for the conversion of demethylmenaquinol (DMKH2) to menaquinol (MKH2). In Shouchella clausii (strain KSM-K16) (Alkalihalobacillus clausii), this protein is Demethylmenaquinone methyltransferase.